A 610-amino-acid chain; its full sequence is Elongation factor 4 (610 aa).

The 183-residue stretch at glutamate 12–glutamine 194 folds into the tr-type G domain. GTP contacts are provided by residues aspartate 24–threonine 29 and asparagine 141–aspartate 144.

It belongs to the TRAFAC class translation factor GTPase superfamily. Classic translation factor GTPase family. LepA subfamily.

The protein localises to the cell membrane. It carries out the reaction GTP + H2O = GDP + phosphate + H(+). Its function is as follows. Required for accurate and efficient protein synthesis under certain stress conditions. May act as a fidelity factor of the translation reaction, by catalyzing a one-codon backward translocation of tRNAs on improperly translocated ribosomes. Back-translocation proceeds from a post-translocation (POST) complex to a pre-translocation (PRE) complex, thus giving elongation factor G a second chance to translocate the tRNAs correctly. Binds to ribosomes in a GTP-dependent manner. This Streptococcus thermophilus (strain CNRZ 1066) protein is Elongation factor 4.